Reading from the N-terminus, the 862-residue chain is Leucine--tRNA ligase (862 aa).

A 'HIGH' region motif is present at residues 51 to 61 (PYPSGSLHMGH). The short motif at 624–628 (KMSKS) is the 'KMSKS' region element. Lysine 627 is a binding site for ATP.

This sequence belongs to the class-I aminoacyl-tRNA synthetase family.

Its subcellular location is the cytoplasm. It catalyses the reaction tRNA(Leu) + L-leucine + ATP = L-leucyl-tRNA(Leu) + AMP + diphosphate. The chain is Leucine--tRNA ligase from Prochlorococcus marinus (strain NATL1A).